We begin with the raw amino-acid sequence, 62 residues long: Zinc finger-containing protein P28b (62 aa).

An RING-type; degenerate zinc finger spans residues 1 to 46 (MKLFTQNDRYFGLLDSCTHIFCITCINIWHKTRRETGASDNCPICR).

This chain is Zinc finger-containing protein P28b, found in Vaccinia virus (strain Western Reserve) (VACV).